The primary structure comprises 184 residues: ATP synthase subunit b 1 (184 aa).

Residues 36–55 (NILNLAILVGVLVFYGRKVV) traverse the membrane as a helical segment.

The protein belongs to the ATPase B chain family. As to quaternary structure, F-type ATPases have 2 components, F(1) - the catalytic core - and F(0) - the membrane proton channel. F(1) has five subunits: alpha(3), beta(3), gamma(1), delta(1), epsilon(1). F(0) has four main subunits: a(1), b(1), b'(1) and c(10-14). The alpha and beta chains form an alternating ring which encloses part of the gamma chain. F(1) is attached to F(0) by a central stalk formed by the gamma and epsilon chains, while a peripheral stalk is formed by the delta, b and b' chains.

It localises to the cellular thylakoid membrane. Its function is as follows. F(1)F(0) ATP synthase produces ATP from ADP in the presence of a proton or sodium gradient. F-type ATPases consist of two structural domains, F(1) containing the extramembraneous catalytic core and F(0) containing the membrane proton channel, linked together by a central stalk and a peripheral stalk. During catalysis, ATP synthesis in the catalytic domain of F(1) is coupled via a rotary mechanism of the central stalk subunits to proton translocation. Functionally, component of the F(0) channel, it forms part of the peripheral stalk, linking F(1) to F(0). This is ATP synthase subunit b 1 from Crocosphaera subtropica (strain ATCC 51142 / BH68) (Cyanothece sp. (strain ATCC 51142)).